The following is a 75-amino-acid chain: DNA-directed RNA polymerase subunit omega (75 aa).

It belongs to the RNA polymerase subunit omega family. In terms of assembly, in cyanobacteria the RNAP catalytic core is composed of 2 alpha, 1 beta, 1 beta', 1 gamma and 1 omega subunit. When a sigma factor is associated with the core the holoenzyme is formed, which can initiate transcription.

It carries out the reaction RNA(n) + a ribonucleoside 5'-triphosphate = RNA(n+1) + diphosphate. In terms of biological role, promotes RNA polymerase assembly. Latches the N- and C-terminal regions of the beta' subunit thereby facilitating its interaction with the beta and alpha subunits. The chain is DNA-directed RNA polymerase subunit omega from Picosynechococcus sp. (strain ATCC 27264 / PCC 7002 / PR-6) (Agmenellum quadruplicatum).